Reading from the N-terminus, the 371-residue chain is Aspartate-semialdehyde dehydrogenase (371 aa).

NADP(+) contacts are provided by residues 11 to 14 (RGMV), 38 to 39 (TS), and Gln-75. Phosphate is bound at residue Arg-104. Cys-137 acts as the Acyl-thioester intermediate in catalysis. Gln-164 serves as a coordination point for substrate. 167 to 168 (SG) provides a ligand contact to NADP(+). Glu-243 serves as a coordination point for substrate. Phosphate is bound at residue Lys-246. A substrate-binding site is contributed by Arg-269. His-276 serves as the catalytic Proton acceptor. NADP(+) is bound at residue Gln-352.

Belongs to the aspartate-semialdehyde dehydrogenase family. As to quaternary structure, homodimer.

The enzyme catalyses L-aspartate 4-semialdehyde + phosphate + NADP(+) = 4-phospho-L-aspartate + NADPH + H(+). It functions in the pathway amino-acid biosynthesis; L-lysine biosynthesis via DAP pathway; (S)-tetrahydrodipicolinate from L-aspartate: step 2/4. Its pathway is amino-acid biosynthesis; L-methionine biosynthesis via de novo pathway; L-homoserine from L-aspartate: step 2/3. It participates in amino-acid biosynthesis; L-threonine biosynthesis; L-threonine from L-aspartate: step 2/5. Functionally, catalyzes the NADPH-dependent formation of L-aspartate-semialdehyde (L-ASA) by the reductive dephosphorylation of L-aspartyl-4-phosphate. In Buchnera aphidicola subsp. Acyrthosiphon pisum (strain APS) (Acyrthosiphon pisum symbiotic bacterium), this protein is Aspartate-semialdehyde dehydrogenase.